The primary structure comprises 637 residues: Phosphomethylpyrimidine synthase (637 aa).

Residues Asn-242, Met-271, Tyr-300, His-336, 356–358 (SRG), 397–400 (DGLR), and Glu-436 each bind substrate. His-440 is a binding site for Zn(2+). Tyr-463 is a binding site for substrate. His-504 is a Zn(2+) binding site. Residues Cys-584, Cys-587, and Cys-592 each contribute to the [4Fe-4S] cluster site.

It belongs to the ThiC family. In terms of assembly, homodimer. It depends on [4Fe-4S] cluster as a cofactor.

The enzyme catalyses 5-amino-1-(5-phospho-beta-D-ribosyl)imidazole + S-adenosyl-L-methionine = 4-amino-2-methyl-5-(phosphooxymethyl)pyrimidine + CO + 5'-deoxyadenosine + formate + L-methionine + 3 H(+). The protein operates within cofactor biosynthesis; thiamine diphosphate biosynthesis. Its function is as follows. Catalyzes the synthesis of the hydroxymethylpyrimidine phosphate (HMP-P) moiety of thiamine from aminoimidazole ribotide (AIR) in a radical S-adenosyl-L-methionine (SAM)-dependent reaction. The chain is Phosphomethylpyrimidine synthase from Bordetella pertussis (strain Tohama I / ATCC BAA-589 / NCTC 13251).